Consider the following 613-residue polypeptide: SNW/SKI-interacting protein (613 aa).

Residues Glu135–Arg170 adopt a coiled-coil conformation. Positions Ser186 to Ala350 are SNW. Disordered stretches follow at residues Leu219–Asp252, Met315–Asp437, and Asp513–Arg613. Phosphoserine is present on residues Ser235 and Ser243. Over residues Pro236–Pro247 the composition is skewed to pro residues. Basic and acidic residues-rich tracts occupy residues Met315–Leu335, Asp358–Asp437, Gln515–Lys529, Val538–Phe548, and Trp562–Asp574. 2 coiled-coil regions span residues Lys318–Ala349 and Arg391–Asp421. The span at Gly577 to Ser590 shows a compositional bias: gly residues. A compositionally biased stretch (basic and acidic residues) spans Ser592 to Arg613.

Belongs to the SNW family. Component of the spliceosome. Interacts with SR45. As to expression, expressed in roots, stems, seedlings, siliques, cotyledons, leaves, inflorescences, seeds and shoot apical meristem.

The protein localises to the nucleus speckle. Splicing factor involved in post-transcriptional regulation of circadian clock and flowering time genes. Associates with the pre-mRNA of PRR7, PRR9, ELF3 and GI, and is necessary for the regulation of their alternative splicing and mRNA maturation. Probably involved in splice site recognition. The polypeptide is SNW/SKI-interacting protein (SKIP) (Arabidopsis thaliana (Mouse-ear cress)).